Here is an 83-residue protein sequence, read N- to C-terminus: MKGSAFAIILGLVVLCACSFAEDEQDQFASPNELLRSMFLESRHELIPEVEGRYCQKWMWTCDSERKCCEGYVCELWCKYNMG.

A signal peptide spans 1–21; sequence MKGSAFAIILGLVVLCACSFA. The propeptide occupies 22–53; it reads EDEQDQFASPNELLRSMFLESRHELIPEVEGR. Disulfide bonds link C55–C69, C62–C74, and C68–C78.

It belongs to the neurotoxin 30 (phrixotoxin) family. Expressed by the venom gland.

It localises to the secreted. Its function is as follows. Probable ion channel inhibitor. The sequence is that of Kappa-theraphotoxin-Cg2b from Chilobrachys guangxiensis (Chinese earth tiger tarantula).